Consider the following 457-residue polypeptide: Argininosuccinate lyase (457 aa).

The protein belongs to the lyase 1 family. Argininosuccinate lyase subfamily.

Its subcellular location is the cytoplasm. The enzyme catalyses 2-(N(omega)-L-arginino)succinate = fumarate + L-arginine. The protein operates within amino-acid biosynthesis; L-arginine biosynthesis; L-arginine from L-ornithine and carbamoyl phosphate: step 3/3. This chain is Argininosuccinate lyase, found in Escherichia coli O157:H7 (strain EC4115 / EHEC).